A 438-amino-acid chain; its full sequence is DNA primase small subunit (438 aa).

Residues glutamate 63, aspartate 127, and aspartate 129 contribute to the active site. Positions 139–149 (CCSGAGVCLKC) match the Zinc knuckle motif motif.

It belongs to the eukaryotic-type primase small subunit family. In terms of assembly, heterodimer of a catalytic subunit Prim1 and a regulatory subunit Prim2, also known as the DNA primase complex. Component of the alpha DNA polymerase complex (also known as the alpha DNA polymerase-primase complex) consisting of four subunits: the catalytic subunit PolA1, the regulatory subunit PolA2, and the primase complex subunits Prim1 and Prim2 respectively. PolA1 associates with the DNA primase complex before association with PolA2. The cofactor is Mg(2+). Mn(2+) is required as a cofactor. As to expression, expressed in embryos (at protein level).

The presence of the regulatory subunit Prim2 accelerates the kinetics of initiation and primer extension. Catalytic subunit of the DNA primase complex and component of the DNA polymerase alpha complex (also known as the alpha DNA polymerase-primase complex) which play an essential role in the initiation of DNA synthesis. During the S phase of the cell cycle, the DNA polymerase alpha complex (composed of a catalytic subunit PolA1, an accessory subunit PolA2 and two primase subunits, the catalytic subunit Prim1 and the regulatory subunit Prim2) is recruited to DNA at the replicative forks. The primase subunit of the polymerase alpha complex initiates DNA synthesis by oligomerising short RNA primers on both leading and lagging strands. These primers are initially extended by the polymerase alpha catalytic subunit and subsequently transferred to polymerase delta and polymerase epsilon for processive synthesis on the lagging and leading strand, respectively. In the primase complex, both subunits are necessary for the initial di-nucleotide formation, but the extension of the primer depends only on the catalytic subunit. Can add both ribo- and deoxynucleotides during elongation of the primers. Binds single stranded DNA. This chain is DNA primase small subunit, found in Drosophila melanogaster (Fruit fly).